We begin with the raw amino-acid sequence, 1034 residues long: FERM domain-containing protein 4B (1034 aa).

An FERM domain is found at Arg59–Lys361. At Ser372 the chain carries Phosphoserine. Coiled coils occupy residues Glu417 to Lys450 and Lys531 to Lys561. Residues Met542–Tyr971 are necessary for adherens junction and tight junction localization. A compositionally biased stretch (low complexity) spans Pro576 to Asp589. Disordered stretches follow at residues Pro576 to Pro614, Asp635 to Gln698, Phe712 to Gln735, and Thr752 to Asp786. Position 608 is a phosphoserine (Ser608). Polar residues-rich tracts occupy residues Asp635–Tyr650 and Met663–Tyr674. The segment covering Ser675–Ser685 has biased composition (low complexity). Ser697 carries the phosphoserine modification. Positions Ser713–Ser722 are enriched in low complexity. The segment covering Gln769 to Asn781 has biased composition (polar residues). Lys882 participates in a covalent cross-link: Glycyl lysine isopeptide (Lys-Gly) (interchain with G-Cter in SUMO2). 2 disordered regions span residues Arg905–Gly925 and Asp1004–Val1034. A compositionally biased stretch (polar residues) spans Ala906–Phe920. Ser915 is subject to Phosphoserine. The span at Ser1018–Val1034 shows a compositional bias: basic and acidic residues. Lys1029 is covalently cross-linked (Glycyl lysine isopeptide (Lys-Gly) (interchain with G-Cter in SUMO2)).

As to quaternary structure, interacts with CYTH3. Interacts with PARD3. Interacts with CYTH1.

The protein localises to the cytoplasm. It is found in the cytoskeleton. It localises to the cell junction. The protein resides in the tight junction. Its subcellular location is the adherens junction. Its function is as follows. Member of GRP1 signaling complexes that are acutely recruited to plasma membrane ruffles in response to insulin receptor signaling. May function as a scaffolding protein that regulates epithelial cell polarity by connecting ARF6 activation with the PAR3 complex. Plays a redundant role with FRMD4A in epithelial polarization. This chain is FERM domain-containing protein 4B, found in Homo sapiens (Human).